The chain runs to 209 residues: Small ribosomal subunit protein uS4 (209 aa).

Residues M1–L13 are compositionally biased toward basic residues. 2 disordered regions span residues M1–P20 and Y28–D49. One can recognise an S4 RNA-binding domain in the interval Q95 to G160.

It belongs to the universal ribosomal protein uS4 family. In terms of assembly, part of the 30S ribosomal subunit. Contacts protein S5. The interaction surface between S4 and S5 is involved in control of translational fidelity.

In terms of biological role, one of the primary rRNA binding proteins, it binds directly to 16S rRNA where it nucleates assembly of the body of the 30S subunit. Its function is as follows. With S5 and S12 plays an important role in translational accuracy. This Clavibacter sepedonicus (Clavibacter michiganensis subsp. sepedonicus) protein is Small ribosomal subunit protein uS4.